The following is a 1772-amino-acid chain: Merozoite surface protein 1 (1772 aa).

The signal sequence occupies residues 1 to 18; sequence MKVIGLLFSFVFFAIKCK. N-linked (GlcNAc...) asparagine glycosylation is present at Asn54. Residues 290 to 319 are disordered; sequence TGGQSSTEPGSGGSSASGTSSSGQASAGTG. A compositionally biased stretch (low complexity) spans 305-319; sequence ASGTSSSGQASAGTG. 2 N-linked (GlcNAc...) asparagine glycosylation sites follow: Asn406 and Asn646. The tract at residues 703–796 is disordered; sequence KERMEQGPAI…QPSQAASSTT (94 aa). Low complexity predominate over residues 724–796; sequence SAESSTDRST…QPSQAASSTT (73 aa). A glycan (N-linked (GlcNAc...) asparagine) is linked at Asn829. A disordered region spans residues 924 to 1070; sequence AAPTPVTPAA…SRAESEEDMP (147 aa). Composition is skewed to low complexity over residues 930 to 946 and 956 to 1052; these read TPAATEQQQQQATPDVQ and SQQP…NSQS. 2 N-linked (GlcNAc...) asparagine glycosylation sites follow: Asn1018 and Asn1090. Residues 1362–1383 are disordered; sequence GAVPGSGTDTRVAGSSVDDNED. 4 N-linked (GlcNAc...) asparagine glycosylation sites follow: Asn1408, Asn1446, Asn1541, and Asn1629. EGF-like domains follow at residues 1661-1703 and 1704-1752; these read HVCV…VENN and NPTC…FCSS. Cys1663 and Cys1675 are oxidised to a cystine. The N-linked (GlcNAc...) asparagine glycan is linked to Asn1680. Intrachain disulfides connect Cys1687-Cys1699, Cys1707-Cys1720, Cys1714-Cys1734, and Cys1736-Cys1750. The GPI-anchor amidated serine moiety is linked to residue Ser1751. A propeptide spans 1752–1772 (removed in mature form); sequence SSSFMGLSILLIITLIVFNIF.

In terms of assembly, forms a complex composed of subunits p83, p30, p38, and p42 which remain non-covalently associated; the complex is formed at the merozoite surface prior to egress from host erythrocytes. Post-translationally, the p230 precursor is cleaved by SUB1 prior to merozoite egress into 4 subunits p83, p30, p38, and p42 which remain non-covalently associated. In a second processing step during erythrocyte invasion, p42 is cleaved by SUB2 into p33 and p19; the latter remains attached to the merozoite surface via its GPI-anchor and stays on the surface during the subsequent ring stage.

The protein resides in the cell membrane. The protein localises to the secreted. Its function is as follows. During the asexual blood stage, involved in merozoite egress from host erythrocytes possibly via its interaction with the host cytoskeleton protein spectrin resulting in the destabilization of the host cytoskeleton and thus leading to erythrocyte cell membrane rupture. Involved in the binding to host erythrocytes and is required for host erythrocyte invasion. The sequence is that of Merozoite surface protein 1 from Plasmodium yoelii yoelii.